Here is a 557-residue protein sequence, read N- to C-terminus: Dihydroxy-acid dehydratase (557 aa).

Cys50 is a binding site for [2Fe-2S] cluster. Asp82 is a Mg(2+) binding site. Cys123 is a binding site for [2Fe-2S] cluster. Residues Asp124 and Lys125 each coordinate Mg(2+). At Lys125 the chain carries N6-carboxylysine. Cys195 contacts [2Fe-2S] cluster. Position 447 (Glu447) interacts with Mg(2+). Ser473 (proton acceptor) is an active-site residue.

The protein belongs to the IlvD/Edd family. Homodimer. [2Fe-2S] cluster is required as a cofactor. It depends on Mg(2+) as a cofactor.

The catalysed reaction is (2R)-2,3-dihydroxy-3-methylbutanoate = 3-methyl-2-oxobutanoate + H2O. It carries out the reaction (2R,3R)-2,3-dihydroxy-3-methylpentanoate = (S)-3-methyl-2-oxopentanoate + H2O. Its pathway is amino-acid biosynthesis; L-isoleucine biosynthesis; L-isoleucine from 2-oxobutanoate: step 3/4. It participates in amino-acid biosynthesis; L-valine biosynthesis; L-valine from pyruvate: step 3/4. Functions in the biosynthesis of branched-chain amino acids. Catalyzes the dehydration of (2R,3R)-2,3-dihydroxy-3-methylpentanoate (2,3-dihydroxy-3-methylvalerate) into 2-oxo-3-methylpentanoate (2-oxo-3-methylvalerate) and of (2R)-2,3-dihydroxy-3-methylbutanoate (2,3-dihydroxyisovalerate) into 2-oxo-3-methylbutanoate (2-oxoisovalerate), the penultimate precursor to L-isoleucine and L-valine, respectively. The protein is Dihydroxy-acid dehydratase of Nitrosospira multiformis (strain ATCC 25196 / NCIMB 11849 / C 71).